A 180-amino-acid chain; its full sequence is Cytidylate kinase (180 aa).

7-15 is an ATP binding site; the sequence is GLPGSGTST.

Belongs to the cytidylate kinase family. Type 2 subfamily.

Its subcellular location is the cytoplasm. It carries out the reaction CMP + ATP = CDP + ADP. The enzyme catalyses dCMP + ATP = dCDP + ADP. This Methanosarcina mazei (strain ATCC BAA-159 / DSM 3647 / Goe1 / Go1 / JCM 11833 / OCM 88) (Methanosarcina frisia) protein is Cytidylate kinase (cmk).